Here is an 876-residue protein sequence, read N- to C-terminus: Valine--tRNA ligase (876 aa).

The short motif at 43 to 53 (PNVTGVLHMGH) is the 'HIGH' region element. Residues 534–538 (KMSKS) carry the 'KMSKS' region motif. An ATP-binding site is contributed by Lys537. Residues 847-876 (PEKVVAIEKAKKADAEAKIEALKASLKSLS) are a coiled coil.

Belongs to the class-I aminoacyl-tRNA synthetase family. ValS type 1 subfamily. Monomer.

It localises to the cytoplasm. The enzyme catalyses tRNA(Val) + L-valine + ATP = L-valyl-tRNA(Val) + AMP + diphosphate. Catalyzes the attachment of valine to tRNA(Val). As ValRS can inadvertently accommodate and process structurally similar amino acids such as threonine, to avoid such errors, it has a 'posttransfer' editing activity that hydrolyzes mischarged Thr-tRNA(Val) in a tRNA-dependent manner. In Christiangramia forsetii (strain DSM 17595 / CGMCC 1.15422 / KT0803) (Gramella forsetii), this protein is Valine--tRNA ligase.